The chain runs to 201 residues: Imidazole glycerol phosphate synthase subunit HisH 1 (201 aa).

Positions 1–201 (MIALIDYKAG…LKLLENFARL (201 aa)) constitute a Glutamine amidotransferase type-1 domain. The Nucleophile role is filled by Cys80. Catalysis depends on residues His183 and Glu185.

Heterodimer of HisH and HisF.

It localises to the cytoplasm. The enzyme catalyses 5-[(5-phospho-1-deoxy-D-ribulos-1-ylimino)methylamino]-1-(5-phospho-beta-D-ribosyl)imidazole-4-carboxamide + L-glutamine = D-erythro-1-(imidazol-4-yl)glycerol 3-phosphate + 5-amino-1-(5-phospho-beta-D-ribosyl)imidazole-4-carboxamide + L-glutamate + H(+). It carries out the reaction L-glutamine + H2O = L-glutamate + NH4(+). It participates in amino-acid biosynthesis; L-histidine biosynthesis; L-histidine from 5-phospho-alpha-D-ribose 1-diphosphate: step 5/9. IGPS catalyzes the conversion of PRFAR and glutamine to IGP, AICAR and glutamate. The HisH subunit provides the glutamine amidotransferase activity that produces the ammonia necessary to HisF for the synthesis of IGP and AICAR. In Campylobacter jejuni subsp. jejuni serotype O:23/36 (strain 81-176), this protein is Imidazole glycerol phosphate synthase subunit HisH 1 (hisH1).